We begin with the raw amino-acid sequence, 583 residues long: Probable lysosomal cobalamin transporter (583 aa).

10 helical membrane-spanning segments follow: residues 8–28 (LIWA…SVFI), 41–61 (VILT…LVPV), 95–115 (IVYY…IPFI), 145–165 (TVSF…VPVA), 188–208 (ALTF…VLYT), 312–332 (LLSG…MLLT), 347–367 (GYIL…VQSA), 375–395 (VIFT…ISAV), 418–438 (LLAT…TSMI), and 506–526 (FFGA…LLVM). Positions 541-552 (LDEDAEEAEEES) are enriched in acidic residues. The tract at residues 541-562 (LDEDAEEAEEESLLANTRGRAE) is disordered.

Belongs to the LIMR family. LMBRD1 subfamily.

The protein localises to the lysosome membrane. Functionally, probable lysosomal cobalamin transporter. Required to export cobalamin from lysosomes allowing its conversion to cofactors. This is Probable lysosomal cobalamin transporter from Aspergillus oryzae (strain ATCC 42149 / RIB 40) (Yellow koji mold).